Here is a 471-residue protein sequence, read N- to C-terminus: Argininosuccinate lyase (471 aa).

This sequence belongs to the lyase 1 family. Argininosuccinate lyase subfamily.

It is found in the cytoplasm. It carries out the reaction 2-(N(omega)-L-arginino)succinate = fumarate + L-arginine. The protein operates within amino-acid biosynthesis; L-arginine biosynthesis; L-arginine from L-ornithine and carbamoyl phosphate: step 3/3. This chain is Argininosuccinate lyase, found in Paramagnetospirillum magneticum (strain ATCC 700264 / AMB-1) (Magnetospirillum magneticum).